The sequence spans 310 residues: UDP-N-acetylenolpyruvoylglucosamine reductase (310 aa).

The FAD-binding PCMH-type domain occupies 34–211; it reads TGGPAQCVYV…REDMGKIAQE (178 aa). The active site involves Arg177. Ser225 serves as the catalytic Proton donor. The active site involves Glu295.

Belongs to the MurB family. It depends on FAD as a cofactor.

It is found in the cytoplasm. The enzyme catalyses UDP-N-acetyl-alpha-D-muramate + NADP(+) = UDP-N-acetyl-3-O-(1-carboxyvinyl)-alpha-D-glucosamine + NADPH + H(+). Its pathway is cell wall biogenesis; peptidoglycan biosynthesis. Its function is as follows. Cell wall formation. The polypeptide is UDP-N-acetylenolpyruvoylglucosamine reductase (Beijerinckia indica subsp. indica (strain ATCC 9039 / DSM 1715 / NCIMB 8712)).